We begin with the raw amino-acid sequence, 198 residues long: Pyridoxine/pyridoxamine 5'-phosphate oxidase (198 aa).

FMN is bound by residues 47-52, 62-63, Arg68, Lys69, and Gln91; these read RMVLVK and FT. Lys52 lines the substrate pocket. Residues Tyr109, Arg113, and Ser117 each contribute to the substrate site. Residues 126-127 and Trp171 each bind FMN; that span reads QS. Residue 177–179 participates in substrate binding; the sequence is RLH. An FMN-binding site is contributed by Arg181.

This sequence belongs to the pyridoxamine 5'-phosphate oxidase family. In terms of assembly, homodimer. It depends on FMN as a cofactor.

It catalyses the reaction pyridoxamine 5'-phosphate + O2 + H2O = pyridoxal 5'-phosphate + H2O2 + NH4(+). The enzyme catalyses pyridoxine 5'-phosphate + O2 = pyridoxal 5'-phosphate + H2O2. It participates in cofactor metabolism; pyridoxal 5'-phosphate salvage; pyridoxal 5'-phosphate from pyridoxamine 5'-phosphate: step 1/1. It functions in the pathway cofactor metabolism; pyridoxal 5'-phosphate salvage; pyridoxal 5'-phosphate from pyridoxine 5'-phosphate: step 1/1. In terms of biological role, catalyzes the oxidation of either pyridoxine 5'-phosphate (PNP) or pyridoxamine 5'-phosphate (PMP) into pyridoxal 5'-phosphate (PLP). This is Pyridoxine/pyridoxamine 5'-phosphate oxidase from Anaeromyxobacter dehalogenans (strain 2CP-C).